The primary structure comprises 315 residues: Methionyl-tRNA formyltransferase (315 aa).

(6S)-5,6,7,8-tetrahydrofolate is bound at residue 113-116 (SLLP).

This sequence belongs to the Fmt family.

It catalyses the reaction L-methionyl-tRNA(fMet) + (6R)-10-formyltetrahydrofolate = N-formyl-L-methionyl-tRNA(fMet) + (6S)-5,6,7,8-tetrahydrofolate + H(+). Attaches a formyl group to the free amino group of methionyl-tRNA(fMet). The formyl group appears to play a dual role in the initiator identity of N-formylmethionyl-tRNA by promoting its recognition by IF2 and preventing the misappropriation of this tRNA by the elongation apparatus. This is Methionyl-tRNA formyltransferase from Salmonella dublin (strain CT_02021853).